Reading from the N-terminus, the 249-residue chain is ATP synthase subunit a (249 aa).

The next 6 membrane-spanning stretches (helical) occupy residues 30–50, 84–104, 114–134, 143–163, 193–213, and 220–240; these read SLYM…GSAG, FFPL…IGVI, LIVT…YGLY, VFVP…IEVI, FVTS…LPLA, and ILEV…TCIY.

The protein belongs to the ATPase A chain family. As to quaternary structure, F-type ATPases have 2 components, CF(1) - the catalytic core - and CF(0) - the membrane proton channel. CF(1) has five subunits: alpha(3), beta(3), gamma(1), delta(1), epsilon(1). CF(0) has three main subunits: a(1), b(2) and c(9-12). The alpha and beta chains form an alternating ring which encloses part of the gamma chain. CF(1) is attached to CF(0) by a central stalk formed by the gamma and epsilon chains, while a peripheral stalk is formed by the delta and b chains.

Its subcellular location is the cell inner membrane. In terms of biological role, key component of the proton channel; it plays a direct role in the translocation of protons across the membrane. The chain is ATP synthase subunit a from Afipia carboxidovorans (strain ATCC 49405 / DSM 1227 / KCTC 32145 / OM5) (Oligotropha carboxidovorans).